Reading from the N-terminus, the 271-residue chain is Thiosulfate sulfurtransferase (271 aa).

Rhodanese domains lie at 21-129 (SAPE…PLSR) and 159-270 (GAAD…TPVE). Residue C230 is the Cysteine persulfide intermediate of the active site. R235 contributes to the substrate binding site.

Its subcellular location is the cytoplasm. The enzyme catalyses thiosulfate + hydrogen cyanide = thiocyanate + sulfite + 2 H(+). This is Thiosulfate sulfurtransferase (rhdA) from Azotobacter vinelandii.